Here is a 313-residue protein sequence, read N- to C-terminus: Probable GTP 3',8-cyclase (313 aa).

One can recognise a Radical SAM core domain in the interval 4 to 224 (RFGRSIEDLR…EIRSKHYRPR (221 aa)). Residue arginine 13 coordinates GTP. [4Fe-4S] cluster-binding residues include cysteine 20, cysteine 24, and cysteine 27. Residue lysine 60 participates in GTP binding. Residue glycine 64 participates in S-adenosyl-L-methionine binding. Threonine 90 is a binding site for GTP. Serine 114 is a binding site for S-adenosyl-L-methionine. Lysine 151 serves as a coordination point for GTP. [4Fe-4S] cluster is bound by residues cysteine 244 and cysteine 247. 249 to 251 (RIR) is a binding site for GTP. Cysteine 261 is a binding site for [4Fe-4S] cluster.

Belongs to the radical SAM superfamily. MoaA family. It depends on [4Fe-4S] cluster as a cofactor.

It carries out the reaction GTP + AH2 + S-adenosyl-L-methionine = (8S)-3',8-cyclo-7,8-dihydroguanosine 5'-triphosphate + 5'-deoxyadenosine + L-methionine + A + H(+). The protein operates within cofactor biosynthesis; molybdopterin biosynthesis. Catalyzes the cyclization of GTP to (8S)-3',8-cyclo-7,8-dihydroguanosine 5'-triphosphate. This is Probable GTP 3',8-cyclase from Sulfurisphaera tokodaii (strain DSM 16993 / JCM 10545 / NBRC 100140 / 7) (Sulfolobus tokodaii).